We begin with the raw amino-acid sequence, 179 residues long: Large ribosomal subunit protein uL6 (179 aa).

It belongs to the universal ribosomal protein uL6 family. In terms of assembly, part of the 50S ribosomal subunit.

Functionally, this protein binds to the 23S rRNA, and is important in its secondary structure. It is located near the subunit interface in the base of the L7/L12 stalk, and near the tRNA binding site of the peptidyltransferase center. This Nocardioides sp. (strain ATCC BAA-499 / JS614) protein is Large ribosomal subunit protein uL6.